Consider the following 241-residue polypeptide: Geranylgeranylglyceryl phosphate synthase (241 aa).

Mg(2+) contacts are provided by D19 and S46. Residues Y167–G173, G198–G199, and G220–T221 contribute to the sn-glycerol 1-phosphate site.

This sequence belongs to the GGGP/HepGP synthase family. Group II subfamily. The cofactor is Mg(2+).

The protein resides in the cytoplasm. The catalysed reaction is sn-glycerol 1-phosphate + (2E,6E,10E)-geranylgeranyl diphosphate = sn-3-O-(geranylgeranyl)glycerol 1-phosphate + diphosphate. Its pathway is membrane lipid metabolism; glycerophospholipid metabolism. Functionally, prenyltransferase that catalyzes the transfer of the geranylgeranyl moiety of geranylgeranyl diphosphate (GGPP) to the C3 hydroxyl of sn-glycerol-1-phosphate (G1P). This reaction is the first ether-bond-formation step in the biosynthesis of archaeal membrane lipids. The protein is Geranylgeranylglyceryl phosphate synthase of Pyrobaculum calidifontis (strain DSM 21063 / JCM 11548 / VA1).